The chain runs to 612 residues: MPKLRSATSTQGRNMAGARALWRATGMKENDFGKPIIAVVNSFTQFVPGHVHLKDMGQLVAAEIEKAGGVAKEFNTIAVDDGIAMGHGGMLYSLPSRDLIADSVEYMVNAHCADAMVCISNCDKITPGMLMAAMRLNIPTIFVSGGPMEAGKTKLSDQLIRLDLVDAMIEAADPNVSDERIDAIERSACPTCGSCSGMFTANSMNCLTEALGLSLPGNGSMLATHADRKELFLKAGRQIVELCKRYYEQDDVSVLPRSIGTFKAFENAMSLDIAMGGSSNTVLHLLAAAQEAGVDFKMEDIDRLSRKVPCLSKIAPNTNKYHMEDVHRAGGIMGLLGELDRAGLIHKNTHTVLGMSMGEQLDQYDIIRNQDEELHKFFRAGPAGIRTTQAFSQDCRWDSVDNDRVNGCIRNKENAISQEGGLAVLFGNLAEDGCIVKTAGVDESIWKFTGTAIVFESQEDAVAGILGGKVKEGHVVVIRYEGPKGGPGMQEMLYPTSYLKSMGLGKKCALLTDGRFSGGTSGLSIGHASPEAASGGAIGLVRDGDIINIDIPNRAINLEISNEELAARRSGQDQKGWQPAHREREVSFALKVFGHFATSADKGAVRDKTLLK.

Aspartate 81 contacts Mg(2+). Residue cysteine 122 participates in [2Fe-2S] cluster binding. Positions 123 and 124 each coordinate Mg(2+). An N6-carboxylysine modification is found at lysine 124. Cysteine 195 is a binding site for [2Fe-2S] cluster. Glutamate 491 contributes to the Mg(2+) binding site. The active-site Proton acceptor is serine 517.

The protein belongs to the IlvD/Edd family. Homodimer. [2Fe-2S] cluster serves as cofactor. It depends on Mg(2+) as a cofactor.

It catalyses the reaction (2R)-2,3-dihydroxy-3-methylbutanoate = 3-methyl-2-oxobutanoate + H2O. It carries out the reaction (2R,3R)-2,3-dihydroxy-3-methylpentanoate = (S)-3-methyl-2-oxopentanoate + H2O. It functions in the pathway amino-acid biosynthesis; L-isoleucine biosynthesis; L-isoleucine from 2-oxobutanoate: step 3/4. The protein operates within amino-acid biosynthesis; L-valine biosynthesis; L-valine from pyruvate: step 3/4. Functionally, functions in the biosynthesis of branched-chain amino acids. Catalyzes the dehydration of (2R,3R)-2,3-dihydroxy-3-methylpentanoate (2,3-dihydroxy-3-methylvalerate) into 2-oxo-3-methylpentanoate (2-oxo-3-methylvalerate) and of (2R)-2,3-dihydroxy-3-methylbutanoate (2,3-dihydroxyisovalerate) into 2-oxo-3-methylbutanoate (2-oxoisovalerate), the penultimate precursor to L-isoleucine and L-valine, respectively. The polypeptide is Dihydroxy-acid dehydratase (Haemophilus influenzae (strain PittEE)).